Consider the following 155-residue polypeptide: Endoribonuclease YbeY (155 aa).

Residues His117, His121, and His127 each contribute to the Zn(2+) site.

It belongs to the endoribonuclease YbeY family. Requires Zn(2+) as cofactor.

It is found in the cytoplasm. In terms of biological role, single strand-specific metallo-endoribonuclease involved in late-stage 70S ribosome quality control and in maturation of the 3' terminus of the 16S rRNA. The polypeptide is Endoribonuclease YbeY (Psychrobacter cryohalolentis (strain ATCC BAA-1226 / DSM 17306 / VKM B-2378 / K5)).